Here is a 164-residue protein sequence, read N- to C-terminus: NADH-quinone oxidoreductase subunit I (164 aa).

4Fe-4S ferredoxin-type domains lie at 54–84 (LRRYPNGEERCIACKLCEAICPAQAITIEAG) and 95–124 (VRYDIDMVKCIYCGFCQEACPVDAIVEGPN). [4Fe-4S] cluster is bound by residues Cys64, Cys67, Cys70, Cys74, Cys104, Cys107, Cys110, and Cys114.

Belongs to the complex I 23 kDa subunit family. As to quaternary structure, NDH-1 is composed of 14 different subunits. Subunits NuoA, H, J, K, L, M, N constitute the membrane sector of the complex. [4Fe-4S] cluster serves as cofactor.

It is found in the cell inner membrane. It catalyses the reaction a quinone + NADH + 5 H(+)(in) = a quinol + NAD(+) + 4 H(+)(out). Its function is as follows. NDH-1 shuttles electrons from NADH, via FMN and iron-sulfur (Fe-S) centers, to quinones in the respiratory chain. The immediate electron acceptor for the enzyme in this species is believed to be ubiquinone. Couples the redox reaction to proton translocation (for every two electrons transferred, four hydrogen ions are translocated across the cytoplasmic membrane), and thus conserves the redox energy in a proton gradient. This Mesorhizobium japonicum (strain LMG 29417 / CECT 9101 / MAFF 303099) (Mesorhizobium loti (strain MAFF 303099)) protein is NADH-quinone oxidoreductase subunit I.